The sequence spans 169 residues: Cell division inhibitor SulA (169 aa).

Residues 106 to 112 (ALRTGNY) are ftsZ binding. A lon protease binding region spans residues 162 to 169 (KIHSNLYH).

The protein belongs to the SulA family. As to quaternary structure, interacts with FtsZ. Post-translationally, is rapidly cleaved and degraded by the Lon protease once DNA damage is repaired.

Functionally, component of the SOS system and an inhibitor of cell division. Accumulation of SulA causes rapid cessation of cell division and the appearance of long, non-septate filaments. In the presence of GTP, binds a polymerization-competent form of FtsZ in a 1:1 ratio, thus inhibiting FtsZ polymerization and therefore preventing it from participating in the assembly of the Z ring. This mechanism prevents the premature segregation of damaged DNA to daughter cells during cell division. The protein is Cell division inhibitor SulA of Salmonella gallinarum (strain 287/91 / NCTC 13346).